The chain runs to 234 residues: UPF0173 metal-dependent hydrolase RHECIAT_CH0001941 (234 aa).

Belongs to the UPF0173 family.

This chain is UPF0173 metal-dependent hydrolase RHECIAT_CH0001941, found in Rhizobium etli (strain CIAT 652).